Here is a 222-residue protein sequence, read N- to C-terminus: 3-dehydroquinate dehydratase (222 aa).

3-dehydroquinate-binding positions include 32-34 (ELR) and Arg64. Catalysis depends on His117, which acts as the Proton donor/acceptor. Lys143 (schiff-base intermediate with substrate) is an active-site residue. Arg181 lines the 3-dehydroquinate pocket.

This sequence belongs to the type-I 3-dehydroquinase family. Homodimer.

It carries out the reaction 3-dehydroquinate = 3-dehydroshikimate + H2O. It participates in metabolic intermediate biosynthesis; chorismate biosynthesis; chorismate from D-erythrose 4-phosphate and phosphoenolpyruvate: step 3/7. Involved in the third step of the chorismate pathway, which leads to the biosynthesis of aromatic amino acids. Catalyzes the cis-dehydration of 3-dehydroquinate (DHQ) and introduces the first double bond of the aromatic ring to yield 3-dehydroshikimate. This Aeropyrum pernix (strain ATCC 700893 / DSM 11879 / JCM 9820 / NBRC 100138 / K1) protein is 3-dehydroquinate dehydratase.